We begin with the raw amino-acid sequence, 382 residues long: Pyrimidine monooxygenase RutA (382 aa).

FMN contacts are provided by residues 68–69, Asn134, Glu143, 159–160, and Ser209; these read IK and RY.

It belongs to the NtaA/SnaA/DszA monooxygenase family. RutA subfamily.

It catalyses the reaction uracil + FMNH2 + NADH + O2 = (Z)-3-ureidoacrylate + FMN + NAD(+) + H2O + H(+). It carries out the reaction thymine + FMNH2 + NADH + O2 = (Z)-2-methylureidoacrylate + FMN + NAD(+) + H2O + H(+). In terms of biological role, catalyzes the pyrimidine ring opening between N-3 and C-4 by an unusual flavin hydroperoxide-catalyzed mechanism, adding oxygen atoms in the process to yield ureidoacrylate peracid, that immediately reacts with FMN forming ureidoacrylate and FMN-N(5)-oxide. The FMN-N(5)-oxide reacts spontaneously with NADH to produce FMN. Requires the flavin reductase RutF to regenerate FMN in vivo. In Escherichia coli O81 (strain ED1a), this protein is Pyrimidine monooxygenase RutA.